The chain runs to 348 residues: Phosphoribosylformylglycinamidine cyclo-ligase (348 aa).

This sequence belongs to the AIR synthase family.

The protein localises to the cytoplasm. It carries out the reaction 2-formamido-N(1)-(5-O-phospho-beta-D-ribosyl)acetamidine + ATP = 5-amino-1-(5-phospho-beta-D-ribosyl)imidazole + ADP + phosphate + H(+). It participates in purine metabolism; IMP biosynthesis via de novo pathway; 5-amino-1-(5-phospho-D-ribosyl)imidazole from N(2)-formyl-N(1)-(5-phospho-D-ribosyl)glycinamide: step 2/2. The chain is Phosphoribosylformylglycinamidine cyclo-ligase from Cereibacter sphaeroides (strain ATCC 17023 / DSM 158 / JCM 6121 / CCUG 31486 / LMG 2827 / NBRC 12203 / NCIMB 8253 / ATH 2.4.1.) (Rhodobacter sphaeroides).